Reading from the N-terminus, the 57-residue chain is uncharacterized protein (57 aa).

The signal sequence occupies residues 1 to 20 (MKKLALILFMGTLVSFYADA).

This is an uncharacterized protein from Escherichia coli (strain K12).